A 388-amino-acid polypeptide reads, in one-letter code: Processive diacylglycerol beta-glucosyltransferase (388 aa).

This sequence belongs to the glycosyltransferase 28 family. UgtP subfamily.

The protein resides in the cell membrane. The catalysed reaction is a 1,2-diacyl-3-O-(beta-D-glucopyranosyl)-sn-glycerol + UDP-alpha-D-glucose = a 1,2-diacyl-3-O-(beta-D-Glc-(1-&gt;6)-beta-D-Glc)-sn-glycerol + UDP + H(+). It carries out the reaction a 1,2-diacyl-3-O-(beta-D-Glc-(1-&gt;6)-beta-D-Glc)-sn-glycerol + UDP-alpha-D-glucose = a 1,2-diacyl-3-O-(beta-D-Glc-(1-&gt;6)-beta-D-Glc-(1-&gt;6)-beta-D-Glc)-sn-glycerol + UDP + H(+). The enzyme catalyses a 1,2-diacyl-sn-glycerol + UDP-alpha-D-glucose = a 1,2-diacyl-3-O-(beta-D-glucopyranosyl)-sn-glycerol + UDP + H(+). It participates in glycolipid metabolism; diglucosyl-diacylglycerol biosynthesis. Functionally, processive glucosyltransferase involved in the biosynthesis of both the bilayer- and non-bilayer-forming membrane glucolipids. Is able to successively transfer up to three glucosyl residues to diacylglycerol (DAG), thereby catalyzing the formation of beta-monoglucosyl-DAG (3-O-(beta-D-glucopyranosyl)-1,2-diacyl-sn-glycerol), beta-diglucosyl-DAG (3-O-(beta-D-glucopyranosyl-beta-(1-&gt;6)-D-glucopyranosyl)-1,2-diacyl-sn-glycerol) and beta-triglucosyl-DAG (3-O-(beta-D-glucopyranosyl-beta-(1-&gt;6)-D-glucopyranosyl-beta-(1-&gt;6)-D-glucopyranosyl)-1,2-diacyl-sn-glycerol). Beta-diglucosyl-DAG is the predominant glycolipid found in Bacillales and is also used as a membrane anchor for lipoteichoic acid (LTA). The chain is Processive diacylglycerol beta-glucosyltransferase from Bacillus cereus (strain 03BB102).